The chain runs to 188 residues: UPF0301 protein Tcr_1827 (188 aa).

The protein belongs to the UPF0301 (AlgH) family.

The sequence is that of UPF0301 protein Tcr_1827 from Hydrogenovibrio crunogenus (strain DSM 25203 / XCL-2) (Thiomicrospira crunogena).